The primary structure comprises 1528 residues: MYPGSSQSRPYQVPPPPPMSPPLSQMHQQMSFVPPPPPPLNRYQTTPNLGASAPPPPPPGPPPASALNPQAPWNGAWGGVPAPRQAYDNRSGMYAQAPIQQYNPQAHAATAPGLNIPPPPLQTDAPMSDTYNPGQDPMFDGFMPDLSFDLEQETMGSSQTWQTTSSSSTNTASVNDNVQSNAPTEERTRRNNSASITGTQSSSNVPGIPSDITASWSLDKVIAWLQMNSFSRDWQETFKSLNIHGAQFLELGSGHFGRGNFGMMHQQVYPKLAKVCTASGTGWDQPREREEGKRMRRLIRGLVHARAVPDSARVPSSHGRQGSINSRGNDKGTHDGSDSPNTPSSQSRSTTIPTFPDGSSFSNHRGVLKNIDIDRHSSPKLNGDSPAASPNPVMASSTPKSSTLSVSPHSSRFGNNVRNSTDSVKAIYGSGIPADAQKMMSNSNLDELINGRGARQSPSDLGDNSAGTDSPVSARDTKLPFRQRMQAKDIDGNLSSPNGEGSLSPQMYRNGLGLDDYLRFKKPGGSIYLMATADGWNYRVVDVTDVETVLDLRSEISRGLGIPDEDGVEFYLTELGKSDHSQPLDDNQLMNHNKSRADAEGTLKLFVKPPPMSQQSTWSAGDTGQRHRFGTSSSMSRQQNTLKDDQSEEARLRAQREYKAEIDRKGREYLAIRKAKLESNNNGLSSSTEGIGIVGKPVDFDTPRHSPYEDKNTDRMFPTRNAPAPPVAPSATLNRVNSLMTGQRRVQGSMDGYPSQRVPPGVGTTTSPKEMSEDRRRQPMSGSQPMGGITSALVDMGRNLGGVALPNRGVSANNVPSKPSPPYRVATAPVSGRDFVSPDNRAAFPRSQTAGDLSPISQMPANFAAYQEPNPSPRGFGAAPVSSAAHKRAPSGPDIDFTEPEVSFDRPAPSTAQNEAQSDDDSGDDSDDGLFVIPIAARKASMKKAKSRASVTFDASDSGDGKRPALTVNTARDRKSVSFNSPQSARTGDDDDDSGRQRRTPKSDMWDSEDGKLGRRKSFKMDVWANRPPAEALINNLEDFFPGMDVDQPVLEEGDQEQNIDGSPVAPSPIAEVDETQSPGHLQINATPLNSLPPSRVQSMYNESDTLGSDESTLKALERPPSFQSLAQRSVRRSGGLGRMKSIREKARGAHEAHKRYTQTSMAAPQGLSRSGGTPATETQPTQNNSSALLRRKSTKMFNANIVQIRPNRDSMLVPDIPQDSISSSSRGAPKHPTTFRWFKGQLIGKGTYGRVYLGMNATTGEFLAVKEVEVNPRAAAGDKKRMKELVAALDQEIETMQHLDHVNIVQYLGCERKETSISIFLEYISGGSIGSCLRKNGKFEESVVQSLTRQTLSGLAYLHREGILHRDLKADNILLDVDGTAKISDFGISKKTDNIYGNDKSNSMQGSVFWMAPEVIRSQGEGYSAKVDIWSLGCVVLEMFAGRRPWAKEEAVGAIYKIANGEIPPIPEDVQDTISPIAVAFMMDCFTVDSHDRPTANKLLSQHPFCELDPNYNFLDSELYAKIRGTY.

Low complexity predominate over residues 1-11; that stretch reads MYPGSSQSRPY. Disordered regions lie at residues 1 to 84, 109 to 208, 303 to 418, 449 to 481, 607 to 652, 695 to 731, 746 to 786, 811 to 929, 943 to 1012, and 1086 to 1191; these read MYPG…PAPR, ATAP…VPGI, VHAR…NNVR, INGR…KLPF, VKPP…EARL, GKPV…APSA, VQGS…SQPM, SANN…SDDG, KKAK…EDGK, and ATPL…ALLR. A compositionally biased stretch (pro residues) spans 12–21; the sequence is QVPPPPPMSP. A compositionally biased stretch (low complexity) spans 22-31; that stretch reads PLSQMHQQMS. The span at 53–64 shows a compositional bias: pro residues; it reads APPPPPPGPPPA. Positions 157–173 are enriched in low complexity; sequence SSQTWQTTSSSSTNTAS. Polar residues-rich tracts occupy residues 174–183, 191–205, and 318–327; these read VNDNVQSNAP, NNSA…SSNV, and HGRQGSINSR. A compositionally biased stretch (basic and acidic residues) spans 328–337; it reads GNDKGTHDGS. Positions 338–363 are enriched in polar residues; the sequence is DSPNTPSSQSRSTTIPTFPDGSSFSN. Residues 396–408 show a composition bias toward low complexity; sequence SSTPKSSTLSVSP. A compositionally biased stretch (polar residues) spans 409–418; sequence HSSRFGNNVR. 2 stretches are compositionally biased toward polar residues: residues 613–622 and 630–641; these read SQQSTWSAGD and GTSSSMSRQQNT. Composition is skewed to basic and acidic residues over residues 642 to 652 and 698 to 714; these read LKDDQSEEARL and VDFD…KNTD. Positions 846-860 are enriched in polar residues; that stretch reads RSQTAGDLSPISQMP. Positions 917-928 are enriched in acidic residues; that stretch reads QSDDDSGDDSDD. Residues 977-986 show a composition bias toward polar residues; the sequence is VSFNSPQSAR. A compositionally biased stretch (basic and acidic residues) spans 1001–1012; the sequence is PKSDMWDSEDGK. The span at 1086-1111 shows a compositional bias: polar residues; sequence ATPLNSLPPSRVQSMYNESDTLGSDE. Over residues 1142 to 1152 the composition is skewed to basic and acidic residues; the sequence is SIREKARGAHE. Residues 1158–1188 are compositionally biased toward polar residues; sequence TQTSMAAPQGLSRSGGTPATETQPTQNNSSA. The 270-residue stretch at 1238–1507 folds into the Protein kinase domain; it reads WFKGQLIGKG…NKLLSQHPFC (270 aa). Residues 1244–1252 and Lys1267 contribute to the ATP site; that span reads IGKGTYGRV.

This sequence belongs to the protein kinase superfamily. STE Ser/Thr protein kinase family. MAP kinase kinase kinase subfamily. As to quaternary structure, interacts with the adapter protein MST50 and MIP11.

The enzyme catalyses L-seryl-[protein] + ATP = O-phospho-L-seryl-[protein] + ADP + H(+). The catalysed reaction is L-threonyl-[protein] + ATP = O-phospho-L-threonyl-[protein] + ADP + H(+). Functionally, mitogen-activated protein kinase kinase kinase; part of the MCK1-MKK2-MPS1 MAP kinase (MAPK) signal transduction cascade that is essential for appressorium formation, penetration and invasive growth. Beside its role in pathogenesis, the MPS1 cascade is active in conidiation and cellular stress responses. Targets downstream of the the MPS1-MAPK pathway include transcription factors MIG1 and SWI6, as well as GSK1 and MPG1. This chain is Mitogen-activated protein kinase kinae kinase MCK1, found in Pyricularia oryzae (strain 70-15 / ATCC MYA-4617 / FGSC 8958) (Rice blast fungus).